We begin with the raw amino-acid sequence, 831 residues long: Probable DNA-directed RNA polymerase (831 aa).

Catalysis depends on residues Asp-490, Lys-560, and Asp-738.

It belongs to the phage and mitochondrial RNA polymerase family.

It is found in the mitochondrion. It carries out the reaction RNA(n) + a ribonucleoside 5'-triphosphate = RNA(n+1) + diphosphate. In terms of biological role, DNA-dependent RNA polymerase catalyzes the transcription of DNA into RNA using the four ribonucleoside triphosphates as substrates. This Gelasinospora sp. (strain G114) protein is Probable DNA-directed RNA polymerase.